A 165-amino-acid polypeptide reads, in one-letter code: SsrA-binding protein (165 aa).

Residues 141 to 165 (KLHDKRQDEKRKQADREVKSALARY) are disordered. The segment covering 145-159 (KRQDEKRKQADREVK) has biased composition (basic and acidic residues).

Belongs to the SmpB family.

It is found in the cytoplasm. Functionally, required for rescue of stalled ribosomes mediated by trans-translation. Binds to transfer-messenger RNA (tmRNA), required for stable association of tmRNA with ribosomes. tmRNA and SmpB together mimic tRNA shape, replacing the anticodon stem-loop with SmpB. tmRNA is encoded by the ssrA gene; the 2 termini fold to resemble tRNA(Ala) and it encodes a 'tag peptide', a short internal open reading frame. During trans-translation Ala-aminoacylated tmRNA acts like a tRNA, entering the A-site of stalled ribosomes, displacing the stalled mRNA. The ribosome then switches to translate the ORF on the tmRNA; the nascent peptide is terminated with the 'tag peptide' encoded by the tmRNA and targeted for degradation. The ribosome is freed to recommence translation, which seems to be the essential function of trans-translation. The polypeptide is SsrA-binding protein (Prochlorococcus marinus (strain MIT 9313)).